Here is a 696-residue protein sequence, read N- to C-terminus: Elongation factor G (696 aa).

One can recognise a tr-type G domain in the interval 8–282 (KDYRNIGIMA…AVVDYLPSPL (275 aa)). Residues 17-24 (AHIDAGKT), 81-85 (DTPGH), and 135-138 (NKMD) each bind GTP.

The protein belongs to the TRAFAC class translation factor GTPase superfamily. Classic translation factor GTPase family. EF-G/EF-2 subfamily.

It is found in the cytoplasm. Catalyzes the GTP-dependent ribosomal translocation step during translation elongation. During this step, the ribosome changes from the pre-translocational (PRE) to the post-translocational (POST) state as the newly formed A-site-bound peptidyl-tRNA and P-site-bound deacylated tRNA move to the P and E sites, respectively. Catalyzes the coordinated movement of the two tRNA molecules, the mRNA and conformational changes in the ribosome. The chain is Elongation factor G from Mycoplasmopsis synoviae (strain 53) (Mycoplasma synoviae).